The chain runs to 694 residues: 4-alpha-glucanotransferase (694 aa).

It belongs to the disproportionating enzyme family.

The protein localises to the cytoplasm. It catalyses the reaction Transfers a segment of a (1-&gt;4)-alpha-D-glucan to a new position in an acceptor, which may be glucose or a (1-&gt;4)-alpha-D-glucan.. In Escherichia coli (strain K12), this protein is 4-alpha-glucanotransferase (malQ).